We begin with the raw amino-acid sequence, 309 residues long: Pyridoxal 5'-phosphate synthase subunit PDX1.3 (309 aa).

Met1 bears the N-acetylmethionine mark. Asp40 serves as a coordination point for D-ribose 5-phosphate. The Schiff-base intermediate with D-ribose 5-phosphate role is filled by Lys97. Gly169 contacts D-ribose 5-phosphate. Residue Arg181 participates in D-glyceraldehyde 3-phosphate binding. Residues Gly230 and 251 to 252 contribute to the D-ribose 5-phosphate site; that span reads GS.

The protein belongs to the PdxS/SNZ family. In terms of assembly, homodimer or heterodimer with PDX1.1 or PDX1.2. Interacts with PDX2. As to expression, expressed in cotyledons, rapidly dividing root stele tissues, stems, leaves, flowers, mature pollen, and siliques.

It is found in the cytoplasm. The protein resides in the cell membrane. It localises to the membrane. The enzyme catalyses aldehydo-D-ribose 5-phosphate + D-glyceraldehyde 3-phosphate + L-glutamine = pyridoxal 5'-phosphate + L-glutamate + phosphate + 3 H2O + H(+). Its pathway is cofactor biosynthesis; pyridoxal 5'-phosphate biosynthesis. Its function is as follows. Catalyzes the formation of pyridoxal 5'-phosphate from ribose 5-phosphate (RBP), glyceraldehyde 3-phosphate (G3P) and ammonia. The ammonia is provided by PDX2. Can also use ribulose 5-phosphate and dihydroxyacetone phosphate as substrates, resulting from enzyme-catalyzed isomerization of RBP and G3P, respectively. Also plays an indirect role in resistance to singlet oxygen-generating photosensitizers. The sequence is that of Pyridoxal 5'-phosphate synthase subunit PDX1.3 (PDX13) from Arabidopsis thaliana (Mouse-ear cress).